Reading from the N-terminus, the 583-residue chain is Isocitrate dehydrogenase kinase/phosphatase (583 aa).

ATP is bound by residues 315 to 321 (APGIRGM) and lysine 336. Residue aspartate 371 is part of the active site.

The protein belongs to the AceK family.

The protein localises to the cytoplasm. The catalysed reaction is L-seryl-[isocitrate dehydrogenase] + ATP = O-phospho-L-seryl-[isocitrate dehydrogenase] + ADP + H(+). Bifunctional enzyme which can phosphorylate or dephosphorylate isocitrate dehydrogenase (IDH) on a specific serine residue. This is a regulatory mechanism which enables bacteria to bypass the Krebs cycle via the glyoxylate shunt in response to the source of carbon. When bacteria are grown on glucose, IDH is fully active and unphosphorylated, but when grown on acetate or ethanol, the activity of IDH declines drastically concomitant with its phosphorylation. The chain is Isocitrate dehydrogenase kinase/phosphatase from Salmonella paratyphi C (strain RKS4594).